The chain runs to 108 residues: Ig kappa chain V-V region HP 123E6 (108 aa).

The tract at residues 1-23 is framework-1; sequence DIQMTQSTSSLSASLGDRVTISC. A disulfide bridge links Cys-23 with Cys-88. Residues 24–34 are complementarity-determining-1; sequence RASQDISNYLN. Residues 35 to 49 are framework-2; it reads WYQQKPDGTVKLLIY. Residues 50 to 56 form a complementarity-determining-2 region; sequence YTSRLHS. Residues 57–88 are framework-3; sequence GVPSRFSGSGSGTDYSLTISNLEQEDIATYFC. Residues 89-97 are complementarity-determining-3; it reads QQGYMLPRT. Residues 98 to 108 form a framework-4 region; sequence FGGGTKLEIKR.

The protein is Ig kappa chain V-V region HP 123E6 of Mus musculus (Mouse).